Reading from the N-terminus, the 93-residue chain is Putative transmembrane protein ORF25 (93 aa).

The next 3 membrane-spanning stretches (helical) occupy residues 1–21 (MAGI…NVNA), 22–42 (FLVL…YASI), and 60–80 (LWIF…VMSL).

The protein localises to the host membrane. The sequence is that of Putative transmembrane protein ORF25 from His1 virus (isolate Australia/Victoria) (His1V).